Here is a 666-residue protein sequence, read N- to C-terminus: MRGCLQLARWLRAAPKCPAASLLKPPSGLANPARFFTTSTACWASRSRAPASQPSSDLESRIAAIPIDRYRNFCIVAHVDHGKSTLSDRLLELTGTIQPGMNKQVLDKLDVERERGITVKAQTCTMIYNHNGEDYLLHLVDTPGHVDFRAEVSRSYASCGGALLLVDASQGIQAQTVANFYLAFSQGLELIPVINKVDLPSADPERALDQMEQSFELDTESAVLVSAKTGLNVQQLLPTVVEKIPAPVGDVNNPLRMLLVDSWYDSYRGVICLVRVFDGEIRAGDQLVSFATGIKYFVGEVGIMYPNETAQSVLRAGQVGYIFFNPGMKRSKEAKIGDTYTKVGFEKVVEPLPGFEEPKAMVFVAAYPVDADHFEHLEDSINQLCLNDRSITVQKESSHALGAGFRLGFLGTLHCSVFEDRLRQEHGASIIITPPSVPVKLIWKDGKEEIISNPAKFPEDEELRGKISEIQEPYVVATLTLPDEYLGKVIELCESNRGVQKSLEYFTSTQVILKYELPLAQLVDDFFGKLKGSTKGYATLDYEESAWQTSNIVKLQLLVNKAPVDAVARLVHYSQVERLGRQWVTKFKEHVDRQLFEIVIQAAVGRKVVARETVKPYRKDVLAKLHASDVSRRRKLLEKQKEGRKKLRAVGNVVIEQKAFQAFLAK.

Residues 1–43 (MRGCLQLARWLRAAPKCPAASLLKPPSGLANPARFFTTSTACW) constitute a mitochondrion transit peptide. Residues 68–248 (DRYRNFCIVA…TVVEKIPAPV (181 aa)) form the tr-type G domain. Residues 77 to 84 (AHVDHGKS), 141 to 145 (DTPGH), and 195 to 198 (NKVD) each bind GTP.

It belongs to the TRAFAC class translation factor GTPase superfamily. Classic translation factor GTPase family. LepA subfamily.

The protein resides in the mitochondrion inner membrane. It carries out the reaction GTP + H2O = GDP + phosphate + H(+). In terms of biological role, promotes mitochondrial protein synthesis. May act as a fidelity factor of the translation reaction, by catalyzing a one-codon backward translocation of tRNAs on improperly translocated ribosomes. Binds to mitochondrial ribosomes in a GTP-dependent manner. The polypeptide is Translation factor guf1, mitochondrial (guf1) (Aspergillus niger (strain ATCC MYA-4892 / CBS 513.88 / FGSC A1513)).